Here is a 320-residue protein sequence, read N- to C-terminus: Malate dehydrogenase (320 aa).

NAD(+) is bound by residues 10–15 (GSGMIG) and Asp-34. Substrate-binding residues include Arg-83 and Arg-89. NAD(+) contacts are provided by residues Asn-96 and 119-121 (ITN). Substrate is bound by residues Asn-121 and Arg-152. The active-site Proton acceptor is His-176.

Belongs to the LDH/MDH superfamily. MDH type 3 family.

The catalysed reaction is (S)-malate + NAD(+) = oxaloacetate + NADH + H(+). Its function is as follows. Catalyzes the reversible oxidation of malate to oxaloacetate. The chain is Malate dehydrogenase from Brucella suis (strain ATCC 23445 / NCTC 10510).